Here is a 183-residue protein sequence, read N- to C-terminus: Inosine/xanthosine triphosphatase (183 aa).

Residue D75 coordinates Mg(2+). D75–G76 is a binding site for substrate.

It belongs to the YjjX NTPase family. Homodimer. The cofactor is Mg(2+). Mn(2+) serves as cofactor.

The enzyme catalyses XTP + H2O = XDP + phosphate + H(+). It carries out the reaction ITP + H2O = IDP + phosphate + H(+). In terms of biological role, phosphatase that hydrolyzes non-canonical purine nucleotides such as XTP and ITP to their respective diphosphate derivatives. Probably excludes non-canonical purines from DNA/RNA precursor pool, thus preventing their incorporation into DNA/RNA and avoiding chromosomal lesions. This is Inosine/xanthosine triphosphatase from Vibrio vulnificus (strain CMCP6).